The sequence spans 262 residues: Zinc import ATP-binding protein ZnuC (262 aa).

Residues 5–220 (VSLEQLCVEF…PSYIALFGNA (216 aa)) form the ABC transporter domain. 37 to 44 (GPNGAGKS) is an ATP binding site. The segment at 236 to 262 (HHDLSGSPVSGDATSCSNHNHGHHHHD) is disordered.

This sequence belongs to the ABC transporter superfamily. Zinc importer (TC 3.A.1.15.5) family. In terms of assembly, the complex is composed of two ATP-binding proteins (ZnuC), two transmembrane proteins (ZnuB) and a solute-binding protein (ZnuA).

It localises to the cell inner membrane. It carries out the reaction Zn(2+)(out) + ATP(in) + H2O(in) = Zn(2+)(in) + ADP(in) + phosphate(in) + H(+)(in). In terms of biological role, part of the ABC transporter complex ZnuABC involved in zinc import. Responsible for energy coupling to the transport system. This Vibrio parahaemolyticus serotype O3:K6 (strain RIMD 2210633) protein is Zinc import ATP-binding protein ZnuC.